Here is a 389-residue protein sequence, read N- to C-terminus: uncharacterized protein (389 aa).

The N-terminal stretch at 1–29 is a signal peptide; the sequence is MQPSFTPSGGKWLSIAVILLVIGLVVGFA.

Belongs to the bacterial solute-binding protein 1 family. WtpA subfamily.

This is an uncharacterized protein from Thermoplasma volcanium (strain ATCC 51530 / DSM 4299 / JCM 9571 / NBRC 15438 / GSS1).